We begin with the raw amino-acid sequence, 340 residues long: Tryptophan--tRNA ligase (340 aa).

Residues arginine 11–threonine 13 and glycine 19–histidine 20 each bind ATP. The short motif at proline 12–histidine 20 is the 'HIGH' region element. Aspartate 140 is a binding site for L-tryptophan. ATP is bound by residues glycine 152 to aspartate 154, leucine 194, and lysine 202 to serine 206. The 'KMSKS' region motif lies at lysine 202–serine 206.

Belongs to the class-I aminoacyl-tRNA synthetase family. As to quaternary structure, homodimer.

It is found in the cytoplasm. The enzyme catalyses tRNA(Trp) + L-tryptophan + ATP = L-tryptophyl-tRNA(Trp) + AMP + diphosphate + H(+). Its function is as follows. Catalyzes the attachment of tryptophan to tRNA(Trp). This is Tryptophan--tRNA ligase from Streptococcus mutans serotype c (strain ATCC 700610 / UA159).